A 156-amino-acid polypeptide reads, in one-letter code: Small ribosomal subunit protein uS7 (156 aa).

It belongs to the universal ribosomal protein uS7 family. Part of the 30S ribosomal subunit. Contacts proteins S9 and S11.

One of the primary rRNA binding proteins, it binds directly to 16S rRNA where it nucleates assembly of the head domain of the 30S subunit. Is located at the subunit interface close to the decoding center, probably blocks exit of the E-site tRNA. The chain is Small ribosomal subunit protein uS7 from Dinoroseobacter shibae (strain DSM 16493 / NCIMB 14021 / DFL 12).